The following is a 558-amino-acid chain: Glucose-6-phosphate isomerase (558 aa).

A2 carries the post-translational modification N-acetylalanine. K12 is modified (N6-acetyllysine). Position 34 is an N6-(2-hydroxyisobutyryl)lysine (K34). S107 carries the phosphoserine modification. The residue at position 109 (T109) is a Phosphothreonine. K142 is modified (N6-acetyllysine). 159–160 (GS) contacts D-glucose 6-phosphate. At S185 the chain carries Phosphoserine; by CK2. Residue 210-215 (SKTFTT) participates in D-glucose 6-phosphate binding. T250 bears the Phosphothreonine mark. The D-glucose 6-phosphate site is built by Q354, E358, and H389. E358 functions as the Proton donor in the catalytic mechanism. H389 is a catalytic residue. N6-acetyllysine; alternate is present on K454. Residue K454 is modified to N6-malonyllysine; alternate. The residue at position 454 (K454) is an N6-succinyllysine; alternate. At S455 the chain carries Phosphoserine. K519 contributes to the D-glucose 6-phosphate binding site. Residue K519 is part of the active site.

The protein belongs to the GPI family. Homodimer in the catalytically active form, monomer in the secreted form. Post-translationally, phosphorylation at Ser-185 by CK2 has been shown to decrease enzymatic activity and may contribute to secretion by a non-classical secretory pathway. ISGylated.

It localises to the cytoplasm. Its subcellular location is the secreted. It carries out the reaction alpha-D-glucose 6-phosphate = beta-D-fructose 6-phosphate. It functions in the pathway carbohydrate degradation; glycolysis; D-glyceraldehyde 3-phosphate and glycerone phosphate from D-glucose: step 2/4. Its function is as follows. In the cytoplasm, catalyzes the conversion of glucose-6-phosphate to fructose-6-phosphate, the second step in glycolysis, and the reverse reaction during gluconeogenesis. Besides it's role as a glycolytic enzyme, also acts as a secreted cytokine: acts as an angiogenic factor (AMF) that stimulates endothelial cell motility. Acts as a neurotrophic factor, neuroleukin, for spinal and sensory neurons. It is secreted by lectin-stimulated T-cells and induces immunoglobulin secretion. The polypeptide is Glucose-6-phosphate isomerase (Sus scrofa (Pig)).